Consider the following 313-residue polypeptide: uncharacterized protein (313 aa).

A run of 3 helical transmembrane segments spans residues 19–41 (GLAV…AGFL), 51–68 (AIIG…IFFL), and 81–103 (IAEF…DFAI).

Its subcellular location is the cell membrane. This is an uncharacterized protein from Aquifex aeolicus (strain VF5).